Consider the following 935-residue polypeptide: Isoleucine--tRNA ligase (935 aa).

The short motif at 58–68 (PYANGSIHVGH) is the 'HIGH' region element. Glu-558 lines the L-isoleucyl-5'-AMP pocket. Residues 599 to 603 (KMSKS) carry the 'KMSKS' region motif. Lys-602 serves as a coordination point for ATP. Residues Cys-897, Cys-900, Cys-917, and Cys-920 each coordinate Zn(2+).

The protein belongs to the class-I aminoacyl-tRNA synthetase family. IleS type 1 subfamily. In terms of assembly, monomer. Zn(2+) is required as a cofactor.

Its subcellular location is the cytoplasm. It catalyses the reaction tRNA(Ile) + L-isoleucine + ATP = L-isoleucyl-tRNA(Ile) + AMP + diphosphate. In terms of biological role, catalyzes the attachment of isoleucine to tRNA(Ile). As IleRS can inadvertently accommodate and process structurally similar amino acids such as valine, to avoid such errors it has two additional distinct tRNA(Ile)-dependent editing activities. One activity is designated as 'pretransfer' editing and involves the hydrolysis of activated Val-AMP. The other activity is designated 'posttransfer' editing and involves deacylation of mischarged Val-tRNA(Ile). The protein is Isoleucine--tRNA ligase of Francisella tularensis subsp. tularensis (strain WY96-3418).